Reading from the N-terminus, the 79-residue chain is MDVQRSSYIFIALSIIAMFLITGVKPEVRDICPGVCHAGIEPDCDTLCISMGFTGGYCQGLTCCCNPKSSKSSIINRPI.

An N-terminal signal peptide occupies residues 1-26; the sequence is MDVQRSSYIFIALSIIAMFLITGVKP. Cystine bridges form between Cys32/Cys65, Cys36/Cys58, Cys44/Cys63, and Cys48/Cys64.

The protein belongs to the DEFL family.

It is found in the secreted. The chain is Putative defensin-like protein 80 (LCR81) from Arabidopsis thaliana (Mouse-ear cress).